We begin with the raw amino-acid sequence, 342 residues long: Oxygen-dependent coproporphyrinogen-III oxidase (342 aa).

Ser-98 serves as a coordination point for substrate. Positions 102 and 112 each coordinate a divalent metal cation. His-112 functions as the Proton donor in the catalytic mechanism. Residue 114 to 116 coordinates substrate; the sequence is NYR. A divalent metal cation-binding residues include His-146 and His-176. Positions 266 to 301 are important for dimerization; that stretch reads YVEFNLVWDRGTIFGLQTNGRTESILMSLPPLARWE.

Belongs to the aerobic coproporphyrinogen-III oxidase family. Homodimer. A divalent metal cation serves as cofactor.

The protein resides in the cytoplasm. It catalyses the reaction coproporphyrinogen III + O2 + 2 H(+) = protoporphyrinogen IX + 2 CO2 + 2 H2O. It participates in porphyrin-containing compound metabolism; protoporphyrin-IX biosynthesis; protoporphyrinogen-IX from coproporphyrinogen-III (O2 route): step 1/1. In terms of biological role, involved in the heme and chlorophyll biosynthesis. Catalyzes the aerobic oxidative decarboxylation of propionate groups of rings A and B of coproporphyrinogen-III to yield the vinyl groups in protoporphyrinogen-IX. The chain is Oxygen-dependent coproporphyrinogen-III oxidase from Prochlorococcus marinus (strain AS9601).